The primary structure comprises 421 residues: ATP-dependent RNA helicase RhlB (421 aa).

The Q motif motif lies at 9-37 (QKFSDFALHPKVVEALEKKGFHNCTPIQA). In terms of domain architecture, Helicase ATP-binding spans 40 to 219 (LPLTLAGRDV…FEQMNNAEYI (180 aa)). 53 to 60 (AQTGTGKT) provides a ligand contact to ATP. The DEAD box signature appears at 165–168 (DEAD). One can recognise a Helicase C-terminal domain in the interval 245–390 (RLLQTLIEEE…VSKYNPDALM (146 aa)). Positions 392-421 (DLPKPLRLTRPRTGNGPRRTGAPRNRRRSG) are disordered. Low complexity predominate over residues 402-414 (PRTGNGPRRTGAP).

It belongs to the DEAD box helicase family. RhlB subfamily. In terms of assembly, component of the RNA degradosome, which is a multiprotein complex involved in RNA processing and mRNA degradation.

The protein localises to the cytoplasm. The enzyme catalyses ATP + H2O = ADP + phosphate + H(+). In terms of biological role, DEAD-box RNA helicase involved in RNA degradation. Has RNA-dependent ATPase activity and unwinds double-stranded RNA. This is ATP-dependent RNA helicase RhlB from Escherichia coli O157:H7 (strain EC4115 / EHEC).